Reading from the N-terminus, the 640-residue chain is Threonine--tRNA ligase (640 aa).

One can recognise a TGS domain in the interval Met-1 to Thr-61. Positions Asp-242 to Pro-533 are catalytic. Zn(2+)-binding residues include Cys-333, His-384, and His-510.

This sequence belongs to the class-II aminoacyl-tRNA synthetase family. As to quaternary structure, homodimer. The cofactor is Zn(2+).

It localises to the cytoplasm. It carries out the reaction tRNA(Thr) + L-threonine + ATP = L-threonyl-tRNA(Thr) + AMP + diphosphate + H(+). Its function is as follows. Catalyzes the attachment of threonine to tRNA(Thr) in a two-step reaction: L-threonine is first activated by ATP to form Thr-AMP and then transferred to the acceptor end of tRNA(Thr). Also edits incorrectly charged L-seryl-tRNA(Thr). This Pseudomonas putida (strain ATCC 700007 / DSM 6899 / JCM 31910 / BCRC 17059 / LMG 24140 / F1) protein is Threonine--tRNA ligase.